Reading from the N-terminus, the 557-residue chain is Formate--tetrahydrofolate ligase (557 aa).

ATP is bound at residue Thr66–Ser73.

Belongs to the formate--tetrahydrofolate ligase family.

The catalysed reaction is (6S)-5,6,7,8-tetrahydrofolate + formate + ATP = (6R)-10-formyltetrahydrofolate + ADP + phosphate. The protein operates within one-carbon metabolism; tetrahydrofolate interconversion. The sequence is that of Formate--tetrahydrofolate ligase from Lactobacillus johnsonii (strain CNCM I-12250 / La1 / NCC 533).